The primary structure comprises 589 residues: DNA ligase (589 aa).

Residue glutamate 250 coordinates ATP. Lysine 252 acts as the N6-AMP-lysine intermediate in catalysis. Positions 257, 272, 302, 342, 417, and 423 each coordinate ATP.

The protein belongs to the ATP-dependent DNA ligase family. The cofactor is Mg(2+).

The enzyme catalyses ATP + (deoxyribonucleotide)n-3'-hydroxyl + 5'-phospho-(deoxyribonucleotide)m = (deoxyribonucleotide)n+m + AMP + diphosphate.. Functionally, DNA ligase that seals nicks in double-stranded DNA during DNA replication, DNA recombination and DNA repair. This Cenarchaeum symbiosum (strain A) protein is DNA ligase.